A 73-amino-acid chain; its full sequence is UPF0352 protein APL_0584 (73 aa).

The protein belongs to the UPF0352 family.

This Actinobacillus pleuropneumoniae serotype 5b (strain L20) protein is UPF0352 protein APL_0584.